We begin with the raw amino-acid sequence, 225 residues long: UPF0758 protein BCB4264_A4572 (225 aa).

The 123-residue stretch at 103–225 (SIRSPEDCAK…FVSLKEKGHI (123 aa)) folds into the MPN domain. The Zn(2+) site is built by His174, His176, and Asp187. Residues 174–187 (HNHPSGDPTPSRED) carry the JAMM motif motif.

The protein belongs to the UPF0758 family.

This is UPF0758 protein BCB4264_A4572 from Bacillus cereus (strain B4264).